Here is a 476-residue protein sequence, read N- to C-terminus: Siroheme synthase (476 aa).

Residues 1–207 (MTANALFPLF…QRHAEAEAVL (207 aa)) form a precorrin-2 dehydrogenase /sirohydrochlorin ferrochelatase region. NAD(+) contacts are provided by residues 25-26 (KV) and 46-47 (PS). Ser132 bears the Phosphoserine mark. A uroporphyrinogen-III C-methyltransferase region spans residues 220-476 (GSVTLVGAGA…SAPCPPARIL (257 aa)). Residue Asp252 is the Proton acceptor of the active site. Catalysis depends on Lys274, which acts as the Proton donor. S-adenosyl-L-methionine-binding positions include 305-307 (GGD), Val310, 335-336 (TA), Met387, and Gly416.

This sequence in the N-terminal section; belongs to the precorrin-2 dehydrogenase / sirohydrochlorin ferrochelatase family. The protein in the C-terminal section; belongs to the precorrin methyltransferase family.

The catalysed reaction is uroporphyrinogen III + 2 S-adenosyl-L-methionine = precorrin-2 + 2 S-adenosyl-L-homocysteine + H(+). It carries out the reaction precorrin-2 + NAD(+) = sirohydrochlorin + NADH + 2 H(+). The enzyme catalyses siroheme + 2 H(+) = sirohydrochlorin + Fe(2+). It participates in cofactor biosynthesis; adenosylcobalamin biosynthesis; precorrin-2 from uroporphyrinogen III: step 1/1. Its pathway is cofactor biosynthesis; adenosylcobalamin biosynthesis; sirohydrochlorin from precorrin-2: step 1/1. The protein operates within porphyrin-containing compound metabolism; siroheme biosynthesis; precorrin-2 from uroporphyrinogen III: step 1/1. It functions in the pathway porphyrin-containing compound metabolism; siroheme biosynthesis; siroheme from sirohydrochlorin: step 1/1. It participates in porphyrin-containing compound metabolism; siroheme biosynthesis; sirohydrochlorin from precorrin-2: step 1/1. Multifunctional enzyme that catalyzes the SAM-dependent methylations of uroporphyrinogen III at position C-2 and C-7 to form precorrin-2 via precorrin-1. Then it catalyzes the NAD-dependent ring dehydrogenation of precorrin-2 to yield sirohydrochlorin. Finally, it catalyzes the ferrochelation of sirohydrochlorin to yield siroheme. This chain is Siroheme synthase, found in Xylella fastidiosa (strain M12).